The sequence spans 71 residues: uncharacterized protein (71 aa).

The signal sequence occupies residues 1-21; sequence MGVGLHGDHVGGELNSANAFT.

This is an uncharacterized protein from Haemophilus influenzae (strain ATCC 51907 / DSM 11121 / KW20 / Rd).